A 552-amino-acid polypeptide reads, in one-letter code: Mothers against decapentaplegic homolog 4 (552 aa).

The mediates interaction with ZBTB7A stretch occupies residues 1–322; sequence MDNMSITNTP…PISNHPAPEY (322 aa). The 125-residue stretch at 18–142 folds into the MH1 domain; the sequence is SIVHSLMCHR…YERVVSPGID (125 aa). Lys-37 carries the post-translational modification N6-acetyllysine. The tract at residues 44–69 is required for interaction with TSC22D1; it reads VKKLKEKKDELDSLITAITTNGAHPS. Zn(2+) is bound at residue Cys-71. A Glycyl lysine isopeptide (Lys-Gly) (interchain with G-Cter in SUMO2) cross-link involves residue Lys-113. Positions 115, 127, and 132 each coordinate Zn(2+). The segment at 167-193 is disordered; sequence EGQPSLPTEGHSIQTIQHPPSNRASTE. The span at 177–193 shows a compositional bias: polar residues; it reads HSIQTIQHPPSNRASTE. Residues 275–320 are SAD; that stretch reads PYTPNLPHHQNGHLQHHPPMPPHPGHYWPVHNELAFQPPISNHPAP. The MH2 domain maps to 323 to 552; that stretch reads WCSIAYFEMD…MPIADPQPLD (230 aa). N6-acetyllysine occurs at positions 428 and 507. Lys-519 is covalently cross-linked (Glycyl lysine isopeptide (Lys-Gly) (interchain with G-Cter in ubiquitin)).

The protein belongs to the dwarfin/SMAD family. Monomer; in the absence of TGF-beta activation. Heterotrimer; on TGF-beta activation. Heterotrimer composed of two molecules of a C-terminally phosphorylated R-SMAD molecule, SMAD2 or SMAD3, and one molecule of SMAD4 to form the transcriptional active SMAD2/SMAD3-SMAD4 complex. Found in a ternary complex composed of SMAD4, STK11/LKB1 and STK11IP. Found in a complex with SMAD1 and YY1. Identified in a complex that contains at least ZNF451, SMAD2, SMAD3 and SMAD4. Interacts with ATF2, COPS5, DACH1, MSG1, SKI, STK11/LKB1, STK11IP and TRIM33. Associates with ZNF423 or ZNF521 in response to BMP2 leading to activate transcription of BMP target genes. Interacts with USP9X. Interacts with RBPMS. Interacts with WWTR1 (via coiled-coil domain). Interacts with CITED1 and CITED2. Interacts with PDPK1 (via PH domain). Interacts with VPS39; this interaction affects heterodimer formation with SMAD3, but not with SMAD2, and leads to inhibition of SMAD3-dependent transcription activation. Interactions with VPS39 and SMAD2 may be mutually exclusive. Interacts (via MH2 domain) with ZNF451 (via N-terminal zinc-finger domains). Interacts with ZC3H3. Interacts weakly with ZNF8. Interacts with NUP93 and IPO7; translocates SMAD4 to the nucleus through the NPC upon BMP7 stimulation resulting in activation of SMAD4 signaling. Interacts with CREB3L1, the interaction takes place upon TGFB1 induction and SMAD4 acts as a CREB3L1 coactivator to induce the expression of genes involved in the assembly of collagen extracellular matrix. Interacts with DLX1. Interacts with ZBTB7A; the interaction is direct and stimulated by TGFB1. Interacts with CREBBP; the recruitment of this transcriptional coactivator is negatively regulated by ZBTB7A. Interacts with EP300; the interaction with this transcriptional coactivator is negatively regulated by ZBTB7A. Interacts with HDAC1. Interacts (via MH2 domain) with ZMIZ1 (via SP-RING-type domain); in the TGF-beta signaling pathway increases the activity of the SMAD3/SMAD4 transcriptional complex. Interacts (via N-terminus) with TSC22D1. Post-translationally, phosphorylated by PDPK1. Monoubiquitinated on Lys-519 by E3 ubiquitin-protein ligase TRIM33. Monoubiquitination hampers its ability to form a stable complex with activated SMAD2/3 resulting in inhibition of TGF-beta/BMP signaling cascade. Deubiquitination by USP9X restores its competence to mediate TGF-beta signaling.

It localises to the cytoplasm. It is found in the nucleus. Common SMAD (co-SMAD) is the coactivator and mediator of signal transduction by TGF-beta (transforming growth factor). Component of the heterotrimeric SMAD2/SMAD3-SMAD4 complex that forms in the nucleus and is required for the TGF-mediated signaling. Promotes binding of the SMAD2/SMAD4/FAST-1 complex to DNA and provides an activation function required for SMAD1 or SMAD2 to stimulate transcription. Component of the multimeric SMAD3/SMAD4/JUN/FOS complex which forms at the AP1 promoter site; required for synergistic transcriptional activity in response to TGF-beta. Acts synergistically with SMAD1 and YY1 in bone morphogenetic protein (BMP)-mediated cardiac-specific gene expression. Binds to SMAD binding elements (SBEs) (5'-GTCT/AGAC-3') within BMP response element (BMPRE) of cardiac activating regions. May act as a tumor suppressor. Positively regulates PDPK1 kinase activity by stimulating its dissociation from the 14-3-3 protein YWHAQ which acts as a negative regulator. In muscle physiology, plays a central role in the balance between atrophy and hypertrophy. When recruited by MSTN, promotes atrophy response via phosphorylated SMAD2/4. MSTN decrease causes SMAD4 release and subsequent recruitment by the BMP pathway to promote hypertrophy via phosphorylated SMAD1/5/8. This is Mothers against decapentaplegic homolog 4 (Smad4) from Rattus norvegicus (Rat).